The chain runs to 58 residues: Photosystem II reaction center protein K (58 aa).

A propeptide spanning residues 1 to 21 is cleaved from the precursor; it reads MTVSYSIYLENSLHFGDALLA. A helical membrane pass occupies residues 29 to 49; the sequence is IFDPIVDVMPVIPVFFLLLAF.

Belongs to the PsbK family. As to quaternary structure, PSII is composed of 1 copy each of membrane proteins PsbA, PsbB, PsbC, PsbD, PsbE, PsbF, PsbH, PsbI, PsbJ, PsbK, PsbL, PsbM, PsbT, PsbX, PsbY, PsbZ, Psb30/Ycf12, at least 3 peripheral proteins of the oxygen-evolving complex and a large number of cofactors. It forms dimeric complexes.

The protein localises to the plastid. Its subcellular location is the chloroplast thylakoid membrane. One of the components of the core complex of photosystem II (PSII). PSII is a light-driven water:plastoquinone oxidoreductase that uses light energy to abstract electrons from H(2)O, generating O(2) and a proton gradient subsequently used for ATP formation. It consists of a core antenna complex that captures photons, and an electron transfer chain that converts photonic excitation into a charge separation. This chain is Photosystem II reaction center protein K, found in Adiantum capillus-veneris (Maidenhair fern).